A 443-amino-acid polypeptide reads, in one-letter code: Ribulose bisphosphate carboxylase large chain (443 aa).

Lys-7 is modified (N6,N6,N6-trimethyllysine). Residues Asn-116 and Thr-166 each coordinate substrate. Residue Lys-168 is the Proton acceptor of the active site. Residue Lys-170 participates in substrate binding. The Mg(2+) site is built by Lys-194, Asp-196, and Glu-197. At Lys-194 the chain carries N6-carboxylysine. Residue His-287 is the Proton acceptor of the active site. Substrate contacts are provided by Arg-288, His-320, and Ser-372.

This sequence belongs to the RuBisCO large chain family. Type I subfamily. In terms of assembly, heterohexadecamer of 8 large chains and 8 small chains; disulfide-linked. The disulfide link is formed within the large subunit homodimers. Mg(2+) serves as cofactor. In terms of processing, the disulfide bond which can form in the large chain dimeric partners within the hexadecamer appears to be associated with oxidative stress and protein turnover.

It localises to the plastid. The protein resides in the chloroplast. The enzyme catalyses 2 (2R)-3-phosphoglycerate + 2 H(+) = D-ribulose 1,5-bisphosphate + CO2 + H2O. It carries out the reaction D-ribulose 1,5-bisphosphate + O2 = 2-phosphoglycolate + (2R)-3-phosphoglycerate + 2 H(+). RuBisCO catalyzes two reactions: the carboxylation of D-ribulose 1,5-bisphosphate, the primary event in carbon dioxide fixation, as well as the oxidative fragmentation of the pentose substrate in the photorespiration process. Both reactions occur simultaneously and in competition at the same active site. The sequence is that of Ribulose bisphosphate carboxylase large chain from Abies sachalinensis (Sakhalin fir).